The sequence spans 594 residues: Beta-fructofuranosidase, insoluble isoenzyme CWINV3 (594 aa).

The first 28 residues, 1–28 (MAKLNRSNIGLSLLLSMFLANFITDLEA), serve as a signal peptide directing secretion. Residues 50–53 (WMND), Gln69, Trp77, and 113–114 (WS) contribute to the substrate site. Asp53 is a catalytic residue. A glycan (N-linked (GlcNAc...) asparagine) is linked at Asn147. Residue 179–180 (RD) coordinates substrate. Residue Asn217 is glycosylated (N-linked (GlcNAc...) asparagine). Residue Glu235 participates in substrate binding. Residues Asn297 and Asn329 are each glycosylated (N-linked (GlcNAc...) asparagine). Residues Cys428 and Cys480 are joined by a disulfide bond.

This sequence belongs to the glycosyl hydrolase 32 family. In terms of tissue distribution, expressed in seedlings, leaves, flowers, and seeds.

It is found in the secreted. Its subcellular location is the extracellular space. It localises to the apoplast. The protein resides in the cell wall. It catalyses the reaction Hydrolysis of terminal, non-reducing (2-&gt;1)- and (2-&gt;6)-linked beta-D-fructofuranose residues in fructans.. In terms of biological role, 6-fructan exohydrolase that can use phlein, levan, neokestose, levanbiose, 6-kestose, and 1-kestose as substrates. In Arabidopsis thaliana (Mouse-ear cress), this protein is Beta-fructofuranosidase, insoluble isoenzyme CWINV3 (CWINV3).